Consider the following 288-residue polypeptide: ATP phosphoribosyltransferase (288 aa).

This sequence belongs to the ATP phosphoribosyltransferase family. Long subfamily. Mg(2+) serves as cofactor.

Its subcellular location is the cytoplasm. The catalysed reaction is 1-(5-phospho-beta-D-ribosyl)-ATP + diphosphate = 5-phospho-alpha-D-ribose 1-diphosphate + ATP. The protein operates within amino-acid biosynthesis; L-histidine biosynthesis; L-histidine from 5-phospho-alpha-D-ribose 1-diphosphate: step 1/9. Its activity is regulated as follows. Feedback inhibited by histidine. Its function is as follows. Catalyzes the condensation of ATP and 5-phosphoribose 1-diphosphate to form N'-(5'-phosphoribosyl)-ATP (PR-ATP). Has a crucial role in the pathway because the rate of histidine biosynthesis seems to be controlled primarily by regulation of HisG enzymatic activity. This Methanococcus maripaludis (strain C6 / ATCC BAA-1332) protein is ATP phosphoribosyltransferase.